The following is a 163-amino-acid chain: Putative pre-16S rRNA nuclease (163 aa).

The protein belongs to the YqgF nuclease family.

Its subcellular location is the cytoplasm. Could be a nuclease involved in processing of the 5'-end of pre-16S rRNA. This chain is Putative pre-16S rRNA nuclease, found in Nitrobacter hamburgensis (strain DSM 10229 / NCIMB 13809 / X14).